The sequence spans 532 residues: Phosphoenolpyruvate carboxykinase (ATP) (532 aa).

Residues R60, Y194, and K200 each contribute to the substrate site. Residues K200, H219, and 237–245 (GLSGTGKTT) contribute to the ATP site. Residues K200 and H219 each coordinate Mn(2+). Mn(2+) is bound at residue D258. E286, R324, and T449 together coordinate ATP. R324 contributes to the substrate binding site.

The protein belongs to the phosphoenolpyruvate carboxykinase (ATP) family. It depends on Mn(2+) as a cofactor.

The protein localises to the cytoplasm. The enzyme catalyses oxaloacetate + ATP = phosphoenolpyruvate + ADP + CO2. The protein operates within carbohydrate biosynthesis; gluconeogenesis. Involved in the gluconeogenesis. Catalyzes the conversion of oxaloacetate (OAA) to phosphoenolpyruvate (PEP) through direct phosphoryl transfer between the nucleoside triphosphate and OAA. The sequence is that of Phosphoenolpyruvate carboxykinase (ATP) from Ruegeria sp. (strain TM1040) (Silicibacter sp.).